The primary structure comprises 265 residues: Acrosomal protein SP-10 (265 aa).

A signal peptide spans 1 to 21 (MNRFLLLMSLYLLGSARGTSS). Residues 62–181 (LNTLSEHGSS…EQASGAPISS (120 aa)) form a disordered region. 16 tandem repeats follow at residues 66–70 (SEHGS), 71–75 (SEHGS), 85–88 (SGEH), 91–95 (SEHAS), 110–114 (VGEQP), 115–119 (SGEQP), 120–123 (SGEH), 125–129 (SGEQP), 135–139 (SGEQP), 140–144 (SDEQP), 145–148 (SGEH), 150–154 (SGEQP), 155–159 (SGEQA), 160–164 (SGEQP), 165–168 (SGEH), and 170–174 (SGEQA). Residues 66-95 (SEHGSSEHGSSKHTVAEHTSGEHAESEHAS) form a 3 X 5 AA repeats of S-E-H-[GA]-S region. Over residues 69–110 (GSSEHGSSKHTVAEHTSGEHAESEHASGEPAATEHAEGEHTV) the composition is skewed to basic and acidic residues. Residues 85–168 (SGEHAESEHA…ASGEQPSGEH (84 aa)) form a 4 X 4 AA repeats of S-G-E-H region. Positions 110-174 (VGEQPSGEQP…SGEHASGEQA (65 aa)) are 9 X 5 AA repeats of [SV]-G-E-Q-[PSA]. The span at 152 to 163 (EQPSGEQASGEQ) shows a compositional bias: polar residues. Asparagine 258 is a glycosylation site (N-linked (GlcNAc...) asparagine).

In terms of tissue distribution, testis.

It localises to the cytoplasmic vesicle. The protein resides in the secretory vesicle. It is found in the acrosome. The chain is Acrosomal protein SP-10 (ACRV1) from Homo sapiens (Human).